The sequence spans 75 residues: uncharacterized protein (75 aa).

A signal peptide spans 1–19 (MQCVCLCVFVLLLAGCVTS).

As to expression, nacreous layer of shell (at protein level).

It is found in the secreted. This is an uncharacterized protein from Margaritifera margaritifera (Freshwater pearl mussel).